Here is a 704-residue protein sequence, read N- to C-terminus: Glycine--tRNA ligase beta subunit (704 aa).

Belongs to the class-II aminoacyl-tRNA synthetase family. In terms of assembly, tetramer of two alpha and two beta subunits.

Its subcellular location is the cytoplasm. The catalysed reaction is tRNA(Gly) + glycine + ATP = glycyl-tRNA(Gly) + AMP + diphosphate. The polypeptide is Glycine--tRNA ligase beta subunit (Delftia acidovorans (strain DSM 14801 / SPH-1)).